A 482-amino-acid polypeptide reads, in one-letter code: Catalase easC (482 aa).

The active site involves histidine 58. Heme is bound at residue tyrosine 347.

This sequence belongs to the catalase family. Heme is required as a cofactor.

Its pathway is alkaloid biosynthesis; ergot alkaloid biosynthesis. Its function is as follows. Catalase; part of the gene cluster that mediates the biosynthesis of fungal ergot alkaloid. DmaW catalyzes the first step of ergot alkaloid biosynthesis by condensing dimethylallyl diphosphate (DMAP) and tryptophan to form 4-dimethylallyl-L-tryptophan. The second step is catalyzed by the methyltransferase easF that methylates 4-dimethylallyl-L-tryptophan in the presence of S-adenosyl-L-methionine, resulting in the formation of 4-dimethylallyl-L-abrine. The catalase easC and the FAD-dependent oxidoreductase easE then transform 4-dimethylallyl-L-abrine to chanoclavine-I which is further oxidized by easD in the presence of NAD(+), resulting in the formation of chanoclavine-I aldehyde. Chanoclavine-I aldehyde is the precursor of ergoamides and ergopeptines in Clavicipitaceae, and clavine-type alcaloids such as fumiclavine in Trichocomaceae. However, the metabolites downstream of chanoclavine-I aldehyde in Arthrodermataceae have not been identified yet. The polypeptide is Catalase easC (Arthroderma otae (strain ATCC MYA-4605 / CBS 113480) (Microsporum canis)).